A 332-amino-acid polypeptide reads, in one-letter code: Mitoferrin-1 (332 aa).

Solcar repeat units lie at residues 31–119 (ASLG…IKRS), 129–213 (NSHI…MQEH), and 220–314 (YRPE…FKYF). Transmembrane regions (helical) follow at residues 33 to 52 (LGTHMTAGAVAGILEHTVMY), 94 to 113 (GLNITVLGAGPAHALYFACY), 131 to 150 (HIANGVAGSVATVLHDAVMN), 188 to 207 (SYSTQLTMNIPFQAVHFITY), 222 to 241 (PETHIISGAAAGAVSAAVTT), and 289 to 308 (GIQARVIYQMPSTAIAWSVY).

This sequence belongs to the mitochondrial carrier (TC 2.A.29) family. In terms of tissue distribution, highly expressed in hematopoietic organs, Expressed in the intermediate cell mass (ICM), a tissue equivalent to the mammalian extraembryonic yolk-sac blood islands. Colocalizes with gata1.

It localises to the mitochondrion inner membrane. The enzyme catalyses Fe(2+)(in) = Fe(2+)(out). Its function is as follows. Mitochondrial iron transporter that specifically mediates iron uptake in developing erythroid cells, thereby playing an essential role in heme biosynthesis. The sequence is that of Mitoferrin-1 (slc25a37) from Danio rerio (Zebrafish).